The chain runs to 258 residues: 6-carboxyhexanoate--CoA ligase (258 aa).

The protein belongs to the BioW family. In terms of assembly, homodimer. Mg(2+) is required as a cofactor.

The catalysed reaction is heptanedioate + ATP + CoA = 6-carboxyhexanoyl-CoA + AMP + diphosphate. Its pathway is metabolic intermediate metabolism; pimeloyl-CoA biosynthesis; pimeloyl-CoA from pimelate: step 1/1. Catalyzes the transformation of pimelate into pimeloyl-CoA with concomitant hydrolysis of ATP to AMP. In Bacillus atrophaeus (strain 1942), this protein is 6-carboxyhexanoate--CoA ligase.